Reading from the N-terminus, the 711-residue chain is MLHLLSKDEFNSTLKSFEEQTESVSWIIDLRLHSKYAVSHIKNAINVSLPTALLRRPSFDIGKVFACIKCNVKVSLDEINAIFLYDSSMAGMNRIYDLVQKFRRGGYSKKIYLLSNGFEAFASSHPDAIVSTEMVKESVPYKIDINENCKLDILHLSDPSAVSTPISPDYSFPLRVPINIPPPLCTPSVVSDTFSEFASHAEYPGFSGLTPFSIHSPTASSVRSCQSIYGSPLSPPNSAFQAEMPYFPISPAISCASSCPSTPDEQKNFFIVGNAPQQTPARPSLRSVPSYPSSNNQRRPSASRVRSFSNYVKSSNVVNPSLSQASLEIIPRKSMKRDSNAQNDGTSTMTSKLKPSVGLSNTRDAPKPGGLRRANKPCFNKETKGSIFSKENKGPFTCNPWGAKKVSPPPCEVLADLNTASIFYKFKRLEEMEMTRSLAFNDSKSDWCCLASSRSTSISRKNRYTDIVPYDKTRVRLAVPKGCSDYINASHIDVGNKKYIACQAPKPGTLLDFWEMVWHNSGTNGVIVMLTNLYEAGSEKCSQYWPDNKDHALCLEGGLRISVQKYETFEDLKVNTHLFRLDKPNGPPKYIHHFWVHTWFDKTHPDIESITGIIRCIDKVPNDGPMFVHCSAGVGRTGTFIAVDQILQVPKNILPKTTNLEDSKDFIFNCVNSLRSQRMKMVQNFEQFKFLYDVVDYLNSGVNQASKPLMT.

In terms of domain architecture, Rhodanese spans 21 to 130 (TESVSWIIDL…FASSHPDAIV (110 aa)). Disordered stretches follow at residues 275-306 (APQQ…SRVR) and 329-376 (IIPR…RANK). 2 stretches are compositionally biased toward polar residues: residues 290-306 (SYPS…SRVR) and 340-363 (NAQN…SNTR). The 266-residue stretch at 433–698 (EMTRSLAFND…KFLYDVVDYL (266 aa)) folds into the Tyrosine-protein phosphatase domain. C630 serves as the catalytic Phosphocysteine intermediate.

The protein belongs to the protein-tyrosine phosphatase family. Non-receptor class subfamily.

The protein resides in the cytoplasm. It carries out the reaction O-phospho-L-tyrosyl-[protein] + H2O = L-tyrosyl-[protein] + phosphate. In terms of biological role, plays a role in inhibiting the onset of mitosis. Dephosphorylates sty1/spc1 and wis1/spc2/sty2. The sequence is that of Tyrosine-protein phosphatase 2 (pyp2) from Schizosaccharomyces pombe (strain 972 / ATCC 24843) (Fission yeast).